Consider the following 222-residue polypeptide: PKHD-type hydroxylase Syncc9902_2001 (222 aa).

Positions 80–174 constitute a Fe2OG dioxygenase domain; sequence RVHSILISRS…RLVCVGWIES (95 aa). Residues histidine 98, aspartate 100, and histidine 155 each coordinate Fe cation. 2-oxoglutarate is bound at residue arginine 165.

Fe(2+) serves as cofactor. Requires L-ascorbate as cofactor.

This is PKHD-type hydroxylase Syncc9902_2001 from Synechococcus sp. (strain CC9902).